The sequence spans 572 residues: Squalene synthase (572 aa).

2 helical membrane-spanning segments follow: residues 316–336 and 492–512; these read SVFN…ELMF and FFLI…LITW.

The protein belongs to the phytoene/squalene synthase family. In terms of assembly, monomer. The cofactor is Mg(2+).

The protein resides in the endoplasmic reticulum membrane. The enzyme catalyses 2 (2E,6E)-farnesyl diphosphate + NADPH + H(+) = squalene + 2 diphosphate + NADP(+). The catalysed reaction is 2 (2E,6E)-farnesyl diphosphate + NADH + H(+) = squalene + 2 diphosphate + NAD(+). It participates in terpene metabolism; lanosterol biosynthesis; lanosterol from farnesyl diphosphate: step 1/3. In terms of biological role, catalyzes the condensation of 2 two farnesyl pyrophosphate moieties to form squalene. It is the first committed enzyme of the sterol biosynthesis pathway. Required for the biosynthesis of ergosterol. The protein is Squalene synthase (ERG9) of Mycosarcoma maydis (Corn smut fungus).